A 381-amino-acid polypeptide reads, in one-letter code: Glycerol-3-phosphate dehydrogenase [NAD(+)] (381 aa).

The interval 1 to 27 (MTAMDRLDHVSNQLAAKRQKKNPEGKP) is disordered. Residues 34-39 (GSGNWG), Phe66, and Phe122 contribute to the NAD(+) site. Residue Lys145 participates in substrate binding. Ala178 is a binding site for NAD(+). Lys238 acts as the Proton acceptor in catalysis. Positions 303 and 332 each coordinate NAD(+). A substrate-binding site is contributed by 303–304 (RN).

It belongs to the NAD-dependent glycerol-3-phosphate dehydrogenase family.

It catalyses the reaction sn-glycerol 3-phosphate + NAD(+) = dihydroxyacetone phosphate + NADH + H(+). The polypeptide is Glycerol-3-phosphate dehydrogenase [NAD(+)] (GPD) (Pichia angusta (Yeast)).